The primary structure comprises 493 residues: Betaine aldehyde dehydrogenase (493 aa).

K(+) is bound by residues Ser-32, Ile-33, and Asp-99. 156 to 158 serves as a coordination point for NAD(+); sequence GAW. The Charge relay system role is filled by Lys-168. Residues 182 to 185 and 235 to 238 each bind NAD(+); these read KPSE and SVPT. Leu-250 contacts K(+). Glu-256 serves as the catalytic Proton acceptor. Residues Gly-258, Cys-290, and Glu-390 each contribute to the NAD(+) site. Cys-290 acts as the Nucleophile in catalysis. The residue at position 290 (Cys-290) is a Cysteine sulfenic acid (-SOH). The K(+) site is built by Lys-460 and Gly-463. Residue Glu-467 is the Charge relay system of the active site.

It belongs to the aldehyde dehydrogenase family. In terms of assembly, dimer of dimers. Requires K(+) as cofactor.

It carries out the reaction betaine aldehyde + NAD(+) + H2O = glycine betaine + NADH + 2 H(+). Its pathway is amine and polyamine biosynthesis; betaine biosynthesis via choline pathway; betaine from betaine aldehyde: step 1/1. Functionally, involved in the biosynthesis of the osmoprotectant glycine betaine. Catalyzes the irreversible oxidation of betaine aldehyde to the corresponding acid. The sequence is that of Betaine aldehyde dehydrogenase from Agrobacterium fabrum (strain C58 / ATCC 33970) (Agrobacterium tumefaciens (strain C58)).